The chain runs to 216 residues: Octanoyltransferase (216 aa).

Positions 32–211 (QEASEMLWFL…RFPYFLEALQ (180 aa)) constitute a BPL/LPL catalytic domain. Substrate is bound by residues 71–78 (RGGRYTYH), 142–144 (AIG), and 155–157 (GFS). Cys-173 (acyl-thioester intermediate) is an active-site residue.

Belongs to the LipB family.

The protein localises to the cytoplasm. The enzyme catalyses octanoyl-[ACP] + L-lysyl-[protein] = N(6)-octanoyl-L-lysyl-[protein] + holo-[ACP] + H(+). It functions in the pathway protein modification; protein lipoylation via endogenous pathway; protein N(6)-(lipoyl)lysine from octanoyl-[acyl-carrier-protein]: step 1/2. Functionally, catalyzes the transfer of endogenously produced octanoic acid from octanoyl-acyl-carrier-protein onto the lipoyl domains of lipoate-dependent enzymes. Lipoyl-ACP can also act as a substrate although octanoyl-ACP is likely to be the physiological substrate. This Zymomonas mobilis subsp. mobilis (strain ATCC 31821 / ZM4 / CP4) protein is Octanoyltransferase.